The sequence spans 372 residues: 4-hydroxy-3-methylbut-2-en-1-yl diphosphate synthase (flavodoxin) (372 aa).

Residues C270, C273, C305, and E312 each coordinate [4Fe-4S] cluster.

Belongs to the IspG family. Requires [4Fe-4S] cluster as cofactor.

The enzyme catalyses (2E)-4-hydroxy-3-methylbut-2-enyl diphosphate + oxidized [flavodoxin] + H2O + 2 H(+) = 2-C-methyl-D-erythritol 2,4-cyclic diphosphate + reduced [flavodoxin]. Its pathway is isoprenoid biosynthesis; isopentenyl diphosphate biosynthesis via DXP pathway; isopentenyl diphosphate from 1-deoxy-D-xylulose 5-phosphate: step 5/6. Converts 2C-methyl-D-erythritol 2,4-cyclodiphosphate (ME-2,4cPP) into 1-hydroxy-2-methyl-2-(E)-butenyl 4-diphosphate. In Salmonella schwarzengrund (strain CVM19633), this protein is 4-hydroxy-3-methylbut-2-en-1-yl diphosphate synthase (flavodoxin).